The sequence spans 92 residues: uncharacterized protein (92 aa).

This is an uncharacterized protein from Homo sapiens (Human).